A 379-amino-acid polypeptide reads, in one-letter code: Cytochrome b (379 aa).

8 helical membrane passes run 33–53 (FGSL…FLAM), 77–98 (WLIR…FLHV), 113–133 (WNIG…GYVL), 178–198 (FFAF…VHLL), 226–246 (IKDV…VLFS), 288–308 (LGGV…PILH), 320–340 (LSQC…WIGG), and 347–367 (FITI…LALP). The heme b site is built by H83 and H97. Heme b contacts are provided by H182 and H196.

It belongs to the cytochrome b family. The cytochrome bc1 complex contains 11 subunits: 3 respiratory subunits (MT-CYB, CYC1 and UQCRFS1), 2 core proteins (UQCRC1 and UQCRC2) and 6 low-molecular weight proteins (UQCRH/QCR6, UQCRB/QCR7, UQCRQ/QCR8, UQCR10/QCR9, UQCR11/QCR10 and a cleavage product of UQCRFS1). This cytochrome bc1 complex then forms a dimer. The cofactor is heme b.

The protein localises to the mitochondrion inner membrane. Its function is as follows. Component of the ubiquinol-cytochrome c reductase complex (complex III or cytochrome b-c1 complex) that is part of the mitochondrial respiratory chain. The b-c1 complex mediates electron transfer from ubiquinol to cytochrome c. Contributes to the generation of a proton gradient across the mitochondrial membrane that is then used for ATP synthesis. The protein is Cytochrome b (MT-CYB) of Sciurus niger (Eastern fox squirrel).